A 614-amino-acid chain; its full sequence is ATP-dependent zinc metalloprotease FtsH (614 aa).

Topologically, residues 1–7 are stromal; it reads MKKQWKK. A helical membrane pass occupies residues 8–28; the sequence is IVLFVLPVIITLITLSSFLFY. The Lumenal segment spans residues 29-116; that stretch reads NQDVVHNWSS…AHPSSSNVNL (88 aa). The chain crosses the membrane as a helical span at residues 117–137; the sequence is VSWLSNLLLPLILIITLFFFF. Over 138-614 the chain is Stromal; that stretch reads RRGNKSSSGP…EFMRIVEERV (477 aa). 211 to 218 lines the ATP pocket; sequence GPPGTGKT. His432 serves as a coordination point for Zn(2+). Glu433 is an active-site residue. The Zn(2+) site is built by His436 and Asp510.

The protein in the central section; belongs to the AAA ATPase family. In the C-terminal section; belongs to the peptidase M41 family. As to quaternary structure, homohexamer. It depends on Zn(2+) as a cofactor.

The protein resides in the plastid. Its subcellular location is the chloroplast thylakoid membrane. In terms of biological role, acts as a processive, ATP-dependent zinc metallopeptidase. In Cyanidium caldarium (Red alga), this protein is ATP-dependent zinc metalloprotease FtsH.